A 300-amino-acid chain; its full sequence is Ribosomal RNA small subunit methyltransferase H (300 aa).

Residues 35–37 (GGH), Asp-55, Phe-82, Asp-100, and Gln-107 each bind S-adenosyl-L-methionine.

Belongs to the methyltransferase superfamily. RsmH family.

The protein resides in the cytoplasm. The enzyme catalyses cytidine(1402) in 16S rRNA + S-adenosyl-L-methionine = N(4)-methylcytidine(1402) in 16S rRNA + S-adenosyl-L-homocysteine + H(+). Functionally, specifically methylates the N4 position of cytidine in position 1402 (C1402) of 16S rRNA. The chain is Ribosomal RNA small subunit methyltransferase H from Chlamydia trachomatis serovar L2 (strain ATCC VR-902B / DSM 19102 / 434/Bu).